We begin with the raw amino-acid sequence, 204 residues long: Holliday junction branch migration complex subunit RuvA (204 aa).

Residues 1-64 (MIGRLQGILL…EDAHLLFGFA (64 aa)) are domain I. The interval 65–143 (QKTDRTLFRE…GVKQSDFFVE (79 aa)) is domain II. The segment at 144-155 (STHIPLSPSIES) is flexible linker. The interval 156–204 (HSESSSDEAISALIALGYKPVEAEKMVKRVAKPELTSEQVIREALKAAL) is domain III.

This sequence belongs to the RuvA family. Homotetramer. Forms an RuvA(8)-RuvB(12)-Holliday junction (HJ) complex. HJ DNA is sandwiched between 2 RuvA tetramers; dsDNA enters through RuvA and exits via RuvB. An RuvB hexamer assembles on each DNA strand where it exits the tetramer. Each RuvB hexamer is contacted by two RuvA subunits (via domain III) on 2 adjacent RuvB subunits; this complex drives branch migration. In the full resolvosome a probable DNA-RuvA(4)-RuvB(12)-RuvC(2) complex forms which resolves the HJ.

Its subcellular location is the cytoplasm. The RuvA-RuvB-RuvC complex processes Holliday junction (HJ) DNA during genetic recombination and DNA repair, while the RuvA-RuvB complex plays an important role in the rescue of blocked DNA replication forks via replication fork reversal (RFR). RuvA specifically binds to HJ cruciform DNA, conferring on it an open structure. The RuvB hexamer acts as an ATP-dependent pump, pulling dsDNA into and through the RuvAB complex. HJ branch migration allows RuvC to scan DNA until it finds its consensus sequence, where it cleaves and resolves the cruciform DNA. This Haemophilus influenzae (strain PittEE) protein is Holliday junction branch migration complex subunit RuvA.